The sequence spans 67 residues: Small ribosomal subunit protein eS17 (67 aa).

It belongs to the eukaryotic ribosomal protein eS17 family.

The chain is Small ribosomal subunit protein eS17 from Thermococcus gammatolerans (strain DSM 15229 / JCM 11827 / EJ3).